We begin with the raw amino-acid sequence, 804 residues long: DEP domain-containing protein 1A (804 aa).

The region spanning 24-108 (FRVGMPLRKH…DNNQLFRFPA (85 aa)) is the DEP domain. The 41-residue stretch at 282–322 (DYFLNLPEPLLTFEYYELFVNILVVCGYITVSDRTSGIHKI) folds into the Rho-GAP domain. Residue serine 513 is modified to Phosphoserine. Positions 592 to 647 (AINALQLCCLLLPPPNRRKLQLLMRMISRMSQNVDMPKLHEQIGTRSLMINTFSRC) are interaction with ZNF224. Positions 726-760 (EQKISTSQAAIAELLENIVRSKSLSLKEKRRKLKQ) form a coiled coil.

Can form dimers. Interacts with ZNF224.

It is found in the nucleus. Functionally, may be involved in transcriptional regulation as a transcriptional corepressor. The DEPDC1A-ZNF224 complex may play a critical role in bladder carcinogenesis by repressing the transcription of the A20 gene, leading to transport of NF-KB protein into the nucleus, resulting in suppression of apoptosis of bladder cancer cells. The chain is DEP domain-containing protein 1A (Depdc1a) from Mus musculus (Mouse).